We begin with the raw amino-acid sequence, 148 residues long: Proline-rich protein 13 (148 aa).

The interval 1-148 is disordered; it reads MWNPNAGQPG…SSSSSSSDSD (148 aa). Pro residues-rich tracts occupy residues 27-67 and 75-93; these read AHPP…PQPG and GPYP…PVNP. Basic residues predominate over residues 109–135; it reads MQKKMKKAHKKMHKHQKHHKYHKHGKH. The segment covering 136–148 has biased composition (low complexity); the sequence is SSSSSSSSSSDSD.

It is found in the nucleus. Functionally, negatively regulates TSP1 expression at the level of transcription. This down-regulation was shown to reduce taxane-induced apoptosis. The chain is Proline-rich protein 13 (PRR13) from Homo sapiens (Human).